Consider the following 471-residue polypeptide: UDP-N-acetylmuramate--L-alanine ligase (471 aa).

114–120 serves as a coordination point for ATP; the sequence is GTHGKTT.

The protein belongs to the MurCDEF family.

Its subcellular location is the cytoplasm. It carries out the reaction UDP-N-acetyl-alpha-D-muramate + L-alanine + ATP = UDP-N-acetyl-alpha-D-muramoyl-L-alanine + ADP + phosphate + H(+). It functions in the pathway cell wall biogenesis; peptidoglycan biosynthesis. Functionally, cell wall formation. This chain is UDP-N-acetylmuramate--L-alanine ligase, found in Methylobacterium sp. (strain 4-46).